A 493-amino-acid polypeptide reads, in one-letter code: Amidophosphoribosyltransferase (493 aa).

A propeptide spanning residues 1–26 (MIPTQPLTADLDCDLGLERPDRPEEA) is cleaved from the precursor. The active-site Nucleophile is Cys-27. One can recognise a Glutamine amidotransferase type-2 domain in the interval 27–252 (CGVFALYAPG…PGEMVRITDA (226 aa)). Cys-268 contacts [4Fe-4S] cluster. Mg(2+) is bound by residues Ser-315, Asp-377, and Asp-378. Residues Cys-414, Cys-465, and Cys-468 each coordinate [4Fe-4S] cluster.

The protein in the C-terminal section; belongs to the purine/pyrimidine phosphoribosyltransferase family. The cofactor is Mg(2+). [4Fe-4S] cluster is required as a cofactor.

The catalysed reaction is 5-phospho-beta-D-ribosylamine + L-glutamate + diphosphate = 5-phospho-alpha-D-ribose 1-diphosphate + L-glutamine + H2O. Its pathway is purine metabolism; IMP biosynthesis via de novo pathway; N(1)-(5-phospho-D-ribosyl)glycinamide from 5-phospho-alpha-D-ribose 1-diphosphate: step 1/2. Functionally, catalyzes the formation of phosphoribosylamine from phosphoribosylpyrophosphate (PRPP) and glutamine. The sequence is that of Amidophosphoribosyltransferase from Synechococcus elongatus (strain ATCC 33912 / PCC 7942 / FACHB-805) (Anacystis nidulans R2).